The following is a 98-amino-acid chain: Small ribosomal subunit protein uS19 (98 aa).

The segment at 77 to 98 (TRTFRGHAGGKAEKGGSAPKKK) is disordered.

Belongs to the universal ribosomal protein uS19 family.

Protein S19 forms a complex with S13 that binds strongly to the 16S ribosomal RNA. This Chlorobium phaeobacteroides (strain DSM 266 / SMG 266 / 2430) protein is Small ribosomal subunit protein uS19.